Reading from the N-terminus, the 295-residue chain is Nucleotide-binding protein Sare_3328 (295 aa).

19-26 (GVSGGGRS) is an ATP binding site. Residue 70–73 (DVRS) coordinates GTP.

The protein belongs to the RapZ-like family.

Displays ATPase and GTPase activities. This is Nucleotide-binding protein Sare_3328 from Salinispora arenicola (strain CNS-205).